The sequence spans 235 residues: Phosphoribosylaminoimidazole-succinocarboxamide synthase (235 aa).

The protein belongs to the SAICAR synthetase family.

The enzyme catalyses 5-amino-1-(5-phospho-D-ribosyl)imidazole-4-carboxylate + L-aspartate + ATP = (2S)-2-[5-amino-1-(5-phospho-beta-D-ribosyl)imidazole-4-carboxamido]succinate + ADP + phosphate + 2 H(+). The protein operates within purine metabolism; IMP biosynthesis via de novo pathway; 5-amino-1-(5-phospho-D-ribosyl)imidazole-4-carboxamide from 5-amino-1-(5-phospho-D-ribosyl)imidazole-4-carboxylate: step 1/2. The sequence is that of Phosphoribosylaminoimidazole-succinocarboxamide synthase from Sulfolobus acidocaldarius (strain ATCC 33909 / DSM 639 / JCM 8929 / NBRC 15157 / NCIMB 11770).